The chain runs to 311 residues: MHPQVASLFDNVYEDLAAATLEFIGTAFFLLFGLGGIQASTAEDTASGQPPASGIEHVLYISTCMGLSLVVSAWLFFRVTGGLFNPNISFALLLVGGLKPLRFVLFCIAQLTGAIAGAAIVRGLTSAPLSVNNVLQQGTSAAQGVFIEMFITAALVLSVLMLAAEKHEATPFAPVGIGLTLFACHLFAVYYTGAAMNSARAFGPAVISGFPEPQHWVYWVGPFLGSLLGAGFYATLKHYKYWHLNPDQATSDYRKSPSDPVALLKSTAETFINVGDEETRNGCASNEEGVRATGDEKSSNATSSRTNFSPV.

Residues 1–16 (MHPQVASLFDNVYEDL) are Cytoplasmic-facing. The chain crosses the membrane as a helical span at residues 17–37 (AAATLEFIGTAFFLLFGLGGI). Residues 38–56 (QASTAEDTASGQPPASGIE) lie on the Extracellular side of the membrane. A helical membrane pass occupies residues 57–77 (HVLYISTCMGLSLVVSAWLFF). Position 78 (Arg78) is a topological domain, cytoplasmic. The helical transmembrane segment at 79-99 (VTGGLFNPNISFALLLVGGLK) threads the bilayer. Residues 85–87 (NPN) carry the NPA 1 motif. Residue Pro100 is a topological domain, extracellular. The chain crosses the membrane as a helical span at residues 101–121 (LRFVLFCIAQLTGAIAGAAIV). Residues 122–143 (RGLTSAPLSVNNVLQQGTSAAQ) are Cytoplasmic-facing. A helical membrane pass occupies residues 144 to 164 (GVFIEMFITAALVLSVLMLAA). Residues 165–168 (EKHE) are Extracellular-facing. The helical transmembrane segment at 169–189 (ATPFAPVGIGLTLFACHLFAV) threads the bilayer. Residues 190–215 (YYTGAAMNSARAFGPAVISGFPEPQH) lie on the Cytoplasmic side of the membrane. The short motif at 197-199 (NSA) is the NPA 2 element. A helical membrane pass occupies residues 216 to 236 (WVYWVGPFLGSLLGAGFYATL). Residues 237–311 (KHYKYWHLNP…TSSRTNFSPV (75 aa)) are Extracellular-facing. The disordered stretch occupies residues 276-311 (DEETRNGCASNEEGVRATGDEKSSNATSSRTNFSPV). Over residues 288 to 298 (EGVRATGDEKS) the composition is skewed to basic and acidic residues. The span at 299–311 (SNATSSRTNFSPV) shows a compositional bias: polar residues. The N-linked (GlcNAc...) asparagine glycan is linked to Asn300.

It belongs to the MIP/aquaporin (TC 1.A.8) family.

It localises to the membrane. The enzyme catalyses H2O(in) = H2O(out). It catalyses the reaction NH4(+)(in) = NH4(+)(out). In terms of biological role, water channel required to facilitate the transport of water across membranes. Also enables low but statistically significant ammonium permeability. May be involved in fungal nitrogen (ammonium) support of the plant host in symbiosis. The sequence is that of Aquaporin Lacbi1:392091 from Laccaria bicolor (strain S238N-H82 / ATCC MYA-4686) (Bicoloured deceiver).